A 245-amino-acid chain; its full sequence is Ninjurin-A (245 aa).

Residues 1 to 170 (MSNLEHITLE…TSSQHPYFYP (170 aa)) are Extracellular-facing. N-linked (GlcNAc...) asparagine glycosylation is found at asparagine 19 and asparagine 28. Positions 32–101 (HSYGGAIDGR…NVNVNVPNGG (70 aa)) are disordered. The span at 92–101 (NVNVNVPNGG) shows a compositional bias: low complexity. Positions 135 to 146 (KKTLAQGMMDLA) are helix alpha1. The tract at residues 149–165 (SANANQLRYVLETSSQH) is helix alpha2. Residues 171–191 (SLLFISLSIIFQIAVGVGLIL) traverse the membrane as a helical segment. Topologically, residues 192-211 (NGQYNIKNGHDICRANRINN) are cytoplasmic. A helical membrane pass occupies residues 212–232 (YTVSGIFIVTVVNVLISAFTV). At 233–245 (DRDTVPALPANTT) the chain is on the extracellular side.

The protein belongs to the ninjurin family. As to quaternary structure, homooligomer. Post-translationally, cleaved by Mmp1 protease to generate the Secreted ninjurin-A form.

It is found in the cell membrane. The protein resides in the secreted. Functionally, effector of non-apoptotic necrotic cell death that mediates plasma membrane rupture (cytolysis): oligomerizes in response to death stimuli and promotes plasma membrane rupture by introducing hydrophilic faces of 2 alpha helices into the hydrophobic membrane, leading to release intracellular molecules that propagate the inflammatory response. Also acts as a homophilic transmembrane adhesion molecule that promotes cell adhesion by mediating homophilic interactions via its extracellular region. Secreted form generated by cleavage, which acts as a negative regulator of cell adhesion. Promotes the loss of cell adhesion in a cell non-autonomous manner. In Drosophila melanogaster (Fruit fly), this protein is Ninjurin-A.